Reading from the N-terminus, the 477-residue chain is Ribulose bisphosphate carboxylase large chain (477 aa).

The propeptide occupies 1 to 2 (MS). Pro-3 is modified (N-acetylproline). Lys-14 bears the N6,N6,N6-trimethyllysine mark. Positions 123 and 173 each coordinate substrate. Lys-175 acts as the Proton acceptor in catalysis. Lys-177 provides a ligand contact to substrate. 3 residues coordinate Mg(2+): Lys-201, Asp-203, and Glu-204. Position 201 is an N6-carboxylysine (Lys-201). His-294 serves as the catalytic Proton acceptor. Substrate is bound by residues Arg-295, His-327, and Ser-379.

The protein belongs to the RuBisCO large chain family. Type I subfamily. In terms of assembly, heterohexadecamer of 8 large chains and 8 small chains; disulfide-linked. The disulfide link is formed within the large subunit homodimers. Requires Mg(2+) as cofactor. The disulfide bond which can form in the large chain dimeric partners within the hexadecamer appears to be associated with oxidative stress and protein turnover.

It localises to the plastid. The protein resides in the chloroplast. It carries out the reaction 2 (2R)-3-phosphoglycerate + 2 H(+) = D-ribulose 1,5-bisphosphate + CO2 + H2O. The enzyme catalyses D-ribulose 1,5-bisphosphate + O2 = 2-phosphoglycolate + (2R)-3-phosphoglycerate + 2 H(+). In terms of biological role, ruBisCO catalyzes two reactions: the carboxylation of D-ribulose 1,5-bisphosphate, the primary event in carbon dioxide fixation, as well as the oxidative fragmentation of the pentose substrate in the photorespiration process. Both reactions occur simultaneously and in competition at the same active site. This Nicotiana otophora (Tobacco) protein is Ribulose bisphosphate carboxylase large chain.